A 405-amino-acid chain; its full sequence is Riboflavin biosynthesis protein RibBA (405 aa).

The DHBP synthase stretch occupies residues 1–205; the sequence is MSEIQLNTIE…IKDLIAYRLR (205 aa). Residues 30 to 31, aspartate 35, 144 to 148, and glutamate 168 contribute to the D-ribulose 5-phosphate site; these read RE and RAGHT. Glutamate 31 provides a ligand contact to Mg(2+). Mg(2+) is bound at residue histidine 147. Residues 206–405 form a GTP cyclohydrolase II region; the sequence is TESIVENGVE…RMGHVLHNIK (200 aa). 256 to 260 serves as a coordination point for GTP; it reads RVHSS. Zn(2+)-binding residues include cysteine 261, cysteine 272, and cysteine 274. GTP is bound by residues glutamine 277, 299–301, and threonine 321; that span reads EGR. The active-site Proton acceptor; for GTP cyclohydrolase activity is aspartate 333. Arginine 335 (nucleophile; for GTP cyclohydrolase activity) is an active-site residue. GTP contacts are provided by serine 356 and lysine 361.

The protein in the N-terminal section; belongs to the DHBP synthase family. In the C-terminal section; belongs to the GTP cyclohydrolase II family. Mg(2+) is required as a cofactor. Mn(2+) serves as cofactor. The cofactor is Zn(2+).

The catalysed reaction is D-ribulose 5-phosphate = (2S)-2-hydroxy-3-oxobutyl phosphate + formate + H(+). The enzyme catalyses GTP + 4 H2O = 2,5-diamino-6-hydroxy-4-(5-phosphoribosylamino)-pyrimidine + formate + 2 phosphate + 3 H(+). It participates in cofactor biosynthesis; riboflavin biosynthesis; 2-hydroxy-3-oxobutyl phosphate from D-ribulose 5-phosphate: step 1/1. The protein operates within cofactor biosynthesis; riboflavin biosynthesis; 5-amino-6-(D-ribitylamino)uracil from GTP: step 1/4. Catalyzes the conversion of D-ribulose 5-phosphate to formate and 3,4-dihydroxy-2-butanone 4-phosphate. Its function is as follows. Catalyzes the conversion of GTP to 2,5-diamino-6-ribosylamino-4(3H)-pyrimidinone 5'-phosphate (DARP), formate and pyrophosphate. The protein is Riboflavin biosynthesis protein RibBA of Parabacteroides distasonis (strain ATCC 8503 / DSM 20701 / CIP 104284 / JCM 5825 / NCTC 11152).